The following is a 144-amino-acid chain: Large ribosomal subunit protein uL15 (144 aa).

The segment at 1 to 54 (MRLNTIKPGEGSKKTAKRVGRGIGSGLGKTCGRGHKGQKSRSGGFHKVGFEGGQ) is disordered. The segment covering 21–31 (RGIGSGLGKTC) has biased composition (gly residues).

Belongs to the universal ribosomal protein uL15 family. Part of the 50S ribosomal subunit.

Functionally, binds to the 23S rRNA. The sequence is that of Large ribosomal subunit protein uL15 from Dechloromonas aromatica (strain RCB).